A 204-amino-acid chain; its full sequence is Ribonuclease HII (204 aa).

The region spanning 1 to 197 is the RNase H type-2 domain; it reads MTLGIDEAGR…KNRILNPKLL (197 aa). A divalent metal cation contacts are provided by D6, E7, and D103.

The protein belongs to the RNase HII family. It depends on Mn(2+) as a cofactor. Mg(2+) is required as a cofactor.

It localises to the cytoplasm. It carries out the reaction Endonucleolytic cleavage to 5'-phosphomonoester.. Endonuclease that specifically degrades the RNA of RNA-DNA hybrids. The chain is Ribonuclease HII from Helicobacter pylori (strain HPAG1).